The sequence spans 399 residues: Enoyl-[acyl-carrier-protein] reductase [NADH] (399 aa).

Residues 48–53 (GASTGY), 74–75 (FE), 111–112 (DA), and 139–140 (LA) contribute to the NAD(+) site. Tyr225 contributes to the substrate binding site. Tyr235 serves as the catalytic Proton donor. NAD(+) contacts are provided by residues Lys244 and 274–276 (VVT).

The protein belongs to the TER reductase family. Monomer.

It catalyses the reaction a 2,3-saturated acyl-[ACP] + NAD(+) = a (2E)-enoyl-[ACP] + NADH + H(+). It functions in the pathway lipid metabolism; fatty acid biosynthesis. Involved in the final reduction of the elongation cycle of fatty acid synthesis (FAS II). Catalyzes the reduction of a carbon-carbon double bond in an enoyl moiety that is covalently linked to an acyl carrier protein (ACP). The chain is Enoyl-[acyl-carrier-protein] reductase [NADH] from Yersinia pseudotuberculosis serotype O:1b (strain IP 31758).